The primary structure comprises 186 residues: Membrane protein Rv1476 (186 aa).

Residues 138–158 form a helical membrane-spanning segment; the sequence is FPWSALTIVLLIGVLAAAVGA. Residues 166–186 are disordered; it reads RRSATSTDAAPGAGDDLNQGV.

It localises to the membrane. In terms of biological role, may affect the expression of genes linked to host macrophage apoptosis and immune response, thereby promoting the survival of M.tuberculosis in host macrophages. Overexpression of the gene increases susceptibility of the bacteria to various stresses, but promotes intracellular survival in host macrophages. It has no impact on the growth rate in vitro. Overexpression causes changes in the transcriptome of THP-1 cells, including expression of genes involved in cell proliferation, fatty acid degradation, cytokine-cytokine receptor interaction and immune response pathways. The chain is Membrane protein Rv1476 from Mycobacterium tuberculosis (strain ATCC 25618 / H37Rv).